The following is a 337-amino-acid chain: Vacuolar protein sorting-associated protein 26B (337 aa).

Residues 311 to 337 are disordered; sequence SQRFEGTSHPETRPQHSGAAAVEQEQE.

It belongs to the VPS26 family. Component of the heterotrimeric retromer cargo-selective complex (CSC) which is believed to associate with variable sorting nexins to form functionally distinct retromer complex variants.

The protein localises to the cytoplasm. It localises to the membrane. It is found in the endosome. Acts as a component of the retromer cargo-selective complex (CSC). The CSC is believed to be the core functional component of retromer or respective retromer complex variants acting to prevent missorting of selected transmembrane cargo proteins into the lysosomal degradation pathway. Retromer mediates retrograde transport of cargo proteins from endosomes to the trans-Golgi network (TGN). The sequence is that of Vacuolar protein sorting-associated protein 26B (vps26b) from Xenopus tropicalis (Western clawed frog).